Consider the following 187-residue polypeptide: Orotate phosphoribosyltransferase (187 aa).

5-phospho-alpha-D-ribose 1-diphosphate contacts are provided by residues R98, K99, K102, H104, and 128–136; that span reads EDVTTTGGS. Residues T132 and R160 each contribute to the orotate site.

It belongs to the purine/pyrimidine phosphoribosyltransferase family. PyrE subfamily. Homodimer. Mg(2+) serves as cofactor.

It catalyses the reaction orotidine 5'-phosphate + diphosphate = orotate + 5-phospho-alpha-D-ribose 1-diphosphate. It functions in the pathway pyrimidine metabolism; UMP biosynthesis via de novo pathway; UMP from orotate: step 1/2. Functionally, catalyzes the transfer of a ribosyl phosphate group from 5-phosphoribose 1-diphosphate to orotate, leading to the formation of orotidine monophosphate (OMP). The chain is Orotate phosphoribosyltransferase from Rhodopseudomonas palustris (strain TIE-1).